The sequence spans 431 residues: Histidinol dehydrogenase 1 (431 aa).

NAD(+)-binding residues include Tyr127, Gln188, and Asn211. Residues Ser234, Gln256, and His259 each contribute to the substrate site. Gln256 and His259 together coordinate Zn(2+). Active-site proton acceptor residues include Glu324 and His325. The substrate site is built by His325, Asp358, Glu412, and His417. Asp358 provides a ligand contact to Zn(2+). His417 contributes to the Zn(2+) binding site.

Belongs to the histidinol dehydrogenase family. It depends on Zn(2+) as a cofactor.

It catalyses the reaction L-histidinol + 2 NAD(+) + H2O = L-histidine + 2 NADH + 3 H(+). Its pathway is amino-acid biosynthesis; L-histidine biosynthesis; L-histidine from 5-phospho-alpha-D-ribose 1-diphosphate: step 9/9. Catalyzes the sequential NAD-dependent oxidations of L-histidinol to L-histidinaldehyde and then to L-histidine. The polypeptide is Histidinol dehydrogenase 1 (hisD1) (Nostoc sp. (strain PCC 7120 / SAG 25.82 / UTEX 2576)).